The following is a 232-amino-acid chain: UPF0758 protein BH3032 (232 aa).

One can recognise an MPN domain in the interval 107–229; the sequence is VIRTPEDVSR…FVSLKEKGHL (123 aa). 3 residues coordinate Zn(2+): His-178, His-180, and Asp-191. The JAMM motif signature appears at 178–191; the sequence is HNHPSGDPTPSRED.

The protein belongs to the UPF0758 family.

The polypeptide is UPF0758 protein BH3032 (Halalkalibacterium halodurans (strain ATCC BAA-125 / DSM 18197 / FERM 7344 / JCM 9153 / C-125) (Bacillus halodurans)).